The chain runs to 279 residues: MGLFGGGNSKSTSNQTTNNENTNIATQGDNLGAVINGNGNSVTMTDHGLVDALVDIGGYMSDSTQAAFGAASDMAYSSTEFAGQAITDGFDYAEGVNRDSLDMAEGINRDSLNFGRDALSVTGDLMTDAMQYSSDAMLASIEGNAGLAGQVMDASTTMTGQSLNFGLDTFSGAMDSLNQSNNNMALLAEFTSNQSTDLARDSMAFGADLMAQYQDNISASNYDAREHMLDASKTAMQFADNMSRSDGQQLAKDSNKTLMIGIVAVSAAVGLYAISKGVN.

The tract at residues 1–28 is disordered; it reads MGLFGGGNSKSTSNQTTNNENTNIATQG. The span at 9 to 23 shows a compositional bias: low complexity; it reads SKSTSNQTTNNENTN. A helical transmembrane segment spans residues 256–273; it reads KTLMIGIVAVSAAVGLYA.

It is found in the host membrane. This is an uncharacterized protein from Pseudoalteromonas espejiana (Bacteriophage PM2).